We begin with the raw amino-acid sequence, 211 residues long: SsrA-binding protein (211 aa).

Disordered stretches follow at residues Met1–Ser20 and Arg170–Asn211. Residues Gln177–Arg187 are compositionally biased toward polar residues.

The protein belongs to the SmpB family.

Its subcellular location is the cytoplasm. Its function is as follows. Required for rescue of stalled ribosomes mediated by trans-translation. Binds to transfer-messenger RNA (tmRNA), required for stable association of tmRNA with ribosomes. tmRNA and SmpB together mimic tRNA shape, replacing the anticodon stem-loop with SmpB. tmRNA is encoded by the ssrA gene; the 2 termini fold to resemble tRNA(Ala) and it encodes a 'tag peptide', a short internal open reading frame. During trans-translation Ala-aminoacylated tmRNA acts like a tRNA, entering the A-site of stalled ribosomes, displacing the stalled mRNA. The ribosome then switches to translate the ORF on the tmRNA; the nascent peptide is terminated with the 'tag peptide' encoded by the tmRNA and targeted for degradation. The ribosome is freed to recommence translation, which seems to be the essential function of trans-translation. The protein is SsrA-binding protein of Tropheryma whipplei (strain TW08/27) (Whipple's bacillus).